Here is a 90-residue protein sequence, read N- to C-terminus: U7-theraphotoxin-Hhn1a 6 (90 aa).

An N-terminal signal peptide occupies residues 1–19 (MKTAIFTVVLALAVFAVLS). Positions 20 to 50 (FGWEANEKALSEEFTELIHEKEAASEAEARE) are excised as a propeptide. 3 disulfides stabilise this stretch: Cys51-Cys65, Cys58-Cys70, and Cys64-Cys81.

Belongs to the neurotoxin 10 (Hwtx-1) family. 13 (Hntx-13) subfamily. In terms of tissue distribution, expressed by the venom gland.

It is found in the secreted. Its function is as follows. Ion channel inhibitor. This is U7-theraphotoxin-Hhn1a 6 from Cyriopagopus hainanus (Chinese bird spider).